The chain runs to 397 residues: Argininosuccinate synthase (397 aa).

Position 9-17 (9-17 (AYSGGLDTS)) interacts with ATP. Tyr87 lines the L-citrulline pocket. An ATP-binding site is contributed by Gly117. Thr119, Asn123, and Asp124 together coordinate L-aspartate. Asn123 is an L-citrulline binding site. Residues Arg127, Ser175, Ser184, Glu260, and Tyr272 each coordinate L-citrulline.

It belongs to the argininosuccinate synthase family. Type 1 subfamily. Homotetramer.

It localises to the cytoplasm. The catalysed reaction is L-citrulline + L-aspartate + ATP = 2-(N(omega)-L-arginino)succinate + AMP + diphosphate + H(+). It functions in the pathway amino-acid biosynthesis; L-arginine biosynthesis; L-arginine from L-ornithine and carbamoyl phosphate: step 2/3. The chain is Argininosuccinate synthase from Methanococcus maripaludis (strain DSM 14266 / JCM 13030 / NBRC 101832 / S2 / LL).